Here is a 204-residue protein sequence, read N- to C-terminus: 3-dehydroquinate dehydratase (204 aa).

3-dehydroquinate contacts are provided by residues S9, 30-32, and R57; that span reads ELR. The Proton donor/acceptor role is filled by H108. K133 serves as the catalytic Schiff-base intermediate with substrate. The 3-dehydroquinate site is built by R167, T186, and Q190.

It belongs to the type-I 3-dehydroquinase family. As to quaternary structure, homodimer.

The catalysed reaction is 3-dehydroquinate = 3-dehydroshikimate + H2O. Its pathway is metabolic intermediate biosynthesis; chorismate biosynthesis; chorismate from D-erythrose 4-phosphate and phosphoenolpyruvate: step 3/7. In terms of biological role, involved in the third step of the chorismate pathway, which leads to the biosynthesis of aromatic amino acids. Catalyzes the cis-dehydration of 3-dehydroquinate (DHQ) and introduces the first double bond of the aromatic ring to yield 3-dehydroshikimate. This is 3-dehydroquinate dehydratase from Metallosphaera sedula (strain ATCC 51363 / DSM 5348 / JCM 9185 / NBRC 15509 / TH2).